A 535-amino-acid polypeptide reads, in one-letter code: Nuclear/nucleolar GTPase 2 (535 aa).

Residues 1–42 (MAKKKERAVNVSGKPRHSLDVNRANDKKGAGGGAGGGGGGRS) form a disordered region. Residues 17–29 (HSLDVNRANDKKG) are compositionally biased toward basic and acidic residues. Gly residues predominate over residues 30–41 (AGGGAGGGGGGR). The CP-type G domain maps to 213–374 (WGELYKVIDS…LIDCPGVVYQ (162 aa)). The segment at 261–264 (NKCD) is G4. A G5 region spans residues 290–292 (SIN). Positions 323-330 (GYPNVGKS) are G1. Positions 349–353 (GETKV) are G2. Residues 367–370 (DCPG) are G3. Residues 464–494 (FFVPPPQQGEDSPSETAEPVEKSDEEGVSSD) are disordered.

This sequence belongs to the TRAFAC class YlqF/YawG GTPase family. RsgA subfamily. As to quaternary structure, interacts (via N-terminus) with the 60S ribosomal proteins RPL10A. This interaction is enhanced by the addition of GTP. In terms of tissue distribution, expressed in roots, shoot apical meristem, leaves, leaf sheaths and flowers.

It localises to the nucleus. Its subcellular location is the nucleolus. The GTPase activity is stimulated in the presence of ribosomes, particularly of the 60S subunit. In terms of biological role, GTPase involved in pre-60S ribosomal subunit maturation. The protein is Nuclear/nucleolar GTPase 2 of Oryza sativa subsp. japonica (Rice).